The sequence spans 158 residues: uncharacterized protein (158 aa).

2 disordered regions span residues 1–86 (MDFR…DHWW) and 138–158 (ASQVGSGKAGPCTPHPSLLGF). The span at 7–76 (SPTTCTTPAS…PTPASSGSAA (70 aa)) shows a compositional bias: low complexity.

This is an uncharacterized protein from Homo sapiens (Human).